Reading from the N-terminus, the 459-residue chain is MSIGKITQIIGAVIDVEFSADNMPKIYDALKVLETGLTLEVQQQLGDHIVRAIAMGGSEGLKRGLGVTNTGEPIKVPVGVKTLGRIMNVLGEPIDNAGEIGQEVDWTIHRSAPDYDELAPTTELLETGIKVIDLICPFAKGGKVGLFGGAGVGKTVNMMELIRNIAIAHSGYSVFAGVGERTREGNDFYHEMKESNVLNKVSLVYGQMNEPPGNRLRVALTGLTMAEYFRDEGRDVLLFIDNIYRYTLAGTEVSALLGRMPSAVGYQPTLASEMGALQERITSTKKGSITSIQAVYVPADDLTDPSPATTFAHLDATVVLSRQVAELGIYPAVDPLDSTSRQLDPLIVGEEHYNVARGVQGVLQRYKELKDIIAILGMDELSEEDKRSVSRARKVQRFLSQPFFVAEVFTGAPGKYVSLKDTIAGFKAILDGEMDDFPEQVFYMTGSIDEVRGRSKEKA.

An ATP-binding site is contributed by 148–155 (GGAGVGKT).

Belongs to the ATPase alpha/beta chains family. In terms of assembly, F-type ATPases have 2 components, CF(1) - the catalytic core - and CF(0) - the membrane proton channel. CF(1) has five subunits: alpha(3), beta(3), gamma(1), delta(1), epsilon(1). CF(0) has three main subunits: a(1), b(2) and c(9-12). The alpha and beta chains form an alternating ring which encloses part of the gamma chain. CF(1) is attached to CF(0) by a central stalk formed by the gamma and epsilon chains, while a peripheral stalk is formed by the delta and b chains.

It is found in the cell inner membrane. The catalysed reaction is ATP + H2O + 4 H(+)(in) = ADP + phosphate + 5 H(+)(out). Functionally, produces ATP from ADP in the presence of a proton gradient across the membrane. The catalytic sites are hosted primarily by the beta subunits. This chain is ATP synthase subunit beta, found in Vesicomyosocius okutanii subsp. Calyptogena okutanii (strain HA).